A 429-amino-acid chain; its full sequence is Serine--tRNA ligase (429 aa).

Residue 228 to 230 coordinates L-serine; the sequence is TSE. ATP is bound at residue 259-261; the sequence is RAE. Residue Glu282 participates in L-serine binding. 346–349 contributes to the ATP binding site; that stretch reads EISS. Ser384 is an L-serine binding site.

The protein belongs to the class-II aminoacyl-tRNA synthetase family. Type-1 seryl-tRNA synthetase subfamily. Homodimer. The tRNA molecule binds across the dimer.

It is found in the cytoplasm. The catalysed reaction is tRNA(Ser) + L-serine + ATP = L-seryl-tRNA(Ser) + AMP + diphosphate + H(+). It catalyses the reaction tRNA(Sec) + L-serine + ATP = L-seryl-tRNA(Sec) + AMP + diphosphate + H(+). It participates in aminoacyl-tRNA biosynthesis; selenocysteinyl-tRNA(Sec) biosynthesis; L-seryl-tRNA(Sec) from L-serine and tRNA(Sec): step 1/1. Catalyzes the attachment of serine to tRNA(Ser). Is also able to aminoacylate tRNA(Sec) with serine, to form the misacylated tRNA L-seryl-tRNA(Sec), which will be further converted into selenocysteinyl-tRNA(Sec). The chain is Serine--tRNA ligase from Anaplasma marginale (strain St. Maries).